Reading from the N-terminus, the 70-residue chain is U-actitoxin-Ael2c (70 aa).

A signal peptide spans 1–21 (SYQRFLFLVVVASLIATSLAI). Positions 22 to 26 (PKDLE) are excised as a propeptide. Intrachain disulfides connect Cys32/Cys65, Cys34/Cys58, and Cys48/Cys66.

It belongs to the sea anemone type 3 (BDS) potassium channel toxin family.

It localises to the secreted. Its subcellular location is the nematocyst. In terms of biological role, potently and selectively inhibits voltage-gated potassium channels Kv11/KCNH/ERG. Acts as a gating-modifier toxin that shifts the voltage-dependence of ERG activation in the positive direction and suppresses its current amplitudes elicited by strong depolarizing pulses that maximally activate the channels. The sequence is that of U-actitoxin-Ael2c from Anthopleura elegantissima (Green aggregating anemone).